The chain runs to 299 residues: Oxygen-dependent coproporphyrinogen-III oxidase (299 aa).

Serine 92 lines the substrate pocket. Positions 96 and 106 each coordinate a divalent metal cation. Histidine 106 functions as the Proton donor in the catalytic mechanism. Residue 108-110 (NVR) coordinates substrate. Histidine 145 and histidine 175 together coordinate a divalent metal cation. Residues 240 to 275 (YVEFNLVWDRGTLFGLQTGGRTESILMSMPPLVRWE) are important for dimerization. A substrate-binding site is contributed by 258–260 (GGR).

Belongs to the aerobic coproporphyrinogen-III oxidase family. As to quaternary structure, homodimer. Requires a divalent metal cation as cofactor.

It is found in the cytoplasm. The catalysed reaction is coproporphyrinogen III + O2 + 2 H(+) = protoporphyrinogen IX + 2 CO2 + 2 H2O. The protein operates within porphyrin-containing compound metabolism; protoporphyrin-IX biosynthesis; protoporphyrinogen-IX from coproporphyrinogen-III (O2 route): step 1/1. Involved in the heme biosynthesis. Catalyzes the aerobic oxidative decarboxylation of propionate groups of rings A and B of coproporphyrinogen-III to yield the vinyl groups in protoporphyrinogen-IX. The polypeptide is Oxygen-dependent coproporphyrinogen-III oxidase (Salmonella typhi).